Consider the following 725-residue polypeptide: Sodium/hydrogen exchanger 7 (725 aa).

Residues 1–20 form a disordered region; it reads MEPGDAARPGSGRATGAPPP. The Cytoplasmic segment spans residues 1–21; sequence MEPGDAARPGSGRATGAPPPR. Residues 22–42 form a helical membrane-spanning segment; sequence LLLLPLLLGWGLRVAAAASAS. Over 43–70 the chain is Lumenal; the sequence is SSGAAAEDSSAMEELATEKEAEESHRQD. Residues 71–91 traverse the membrane as a helical segment; it reads SVSLLTFILLLTLTILTIWLF. Residues 92–95 are Cytoplasmic-facing; sequence KHRR. A helical transmembrane segment spans residues 96 to 116; that stretch reads VRFLHETGLAMIYGLIVGVIL. Residues 117–175 lie on the Lumenal side of the membrane; it reads RYGTPATSGRDKSLSCTQEDRAFSTLLVNVSGKFFEYTLKGEISPGKINSVEQNDMLRK. N-linked (GlcNAc...) asparagine glycosylation is present at Asn-145. A helical membrane pass occupies residues 176–196; it reads VTFDPEVFFNILLPPIIFHAG. Topologically, residues 197–210 are cytoplasmic; it reads YSLKKRHFFRNLGS. A helical membrane pass occupies residues 211-231; it reads ILAYAFLGTAVSCFIIGNLMY. Residues 232–251 lie on the Lumenal side of the membrane; the sequence is GVVKLMKIMGQLSDKFYYTD. A helical transmembrane segment spans residues 252 to 272; sequence CLFFGAIISATDPVTVLAIFN. The Cytoplasmic segment spans residues 273–277; the sequence is ELHAD. A helical membrane pass occupies residues 278 to 298; it reads VDLYALLFGESVLNDAVAIVL. Topologically, residues 299–322 are lumenal; it reads SSSIVAYQPAGLNTHAFDAAAFFK. Residues 323–343 form a helical membrane-spanning segment; that stretch reads SVGIFLGIFSGSFTMGAVTGV. Residues 344-349 are Cytoplasmic-facing; the sequence is NANVTK. 2 helical membrane passes run 350–370 and 371–391; these read FTKLHCFPLLETALFFLMSWS and TFLLAEACGFTGVVAVLFCGI. Topologically, residues 392 to 414 are cytoplasmic; the sequence is TQAHYTYNNLSVESRSRTKQLFE. Residues 415 to 435 traverse the membrane as a helical segment; it reads VLHFLAENFIFSYMGLALFTF. Topologically, residues 436 to 442 are lumenal; it reads QKHVFSP. Residues 443 to 463 form a helical membrane-spanning segment; sequence IFIIGAFVAIFLGRAAHIYPL. Topologically, residues 464–474 are cytoplasmic; sequence SFFLNLGRRHK. A helical transmembrane segment spans residues 475–497; it reads IGWNFQHMMMFSGLRGAMAFALA. Residues 498–513 lie on the Lumenal side of the membrane; it reads IRDTASYARQMMFTTT. The chain crosses the membrane as a helical span at residues 514–534; sequence LLIVFFTVWIIGGGTTPMLSW. 2 required for trans-Golgi network localization regions span residues 533-559 and 563-568; these read SWLNIRVGVEEPSEEDQNEHHWQYFRV and PDQDPP. At 535 to 725 the chain is on the cytoplasmic side; it reads LNIRVGVEEP…RLVFPLEDNA (191 aa). At Ser-545 the chain carries Phosphoserine. Disordered stretches follow at residues 567–590 and 669–714; these read PPPNNDSFQVLQGDGPDSARGNRT and TVTA…SSRG. Low complexity predominate over residues 675–684; it reads SSSSHTASTS. Over residues 687–704 the composition is skewed to basic and acidic residues; it reads GSRRTKSSSEEVLERDLG.

This sequence belongs to the monovalent cation:proton antiporter 1 (CPA1) transporter (TC 2.A.36) family. Interacts with SCAMP1, SCAMP2 and SCAMP5; may participate in its shuttling from trans-Golgi network to recycling endosomes. In terms of processing, N-glycosylated. In terms of tissue distribution, ubiquitously expressed.

It is found in the golgi apparatus. The protein localises to the trans-Golgi network membrane. It localises to the recycling endosome membrane. The protein resides in the cell membrane. The enzyme catalyses Na(+)(in) + H(+)(out) = Na(+)(out) + H(+)(in). It carries out the reaction K(+)(in) + H(+)(out) = K(+)(out) + H(+)(in). Its activity is regulated as follows. Inhibited by benzamil and quinine but not by amiloride. Its function is as follows. Golgi Na(+), K(+)/(H+) antiporter. Mediates the electoneutral influx of Na(+) or K(+) in exchange for H(+). May contribute to the regulation of Golgi apparatus volume and pH. This Homo sapiens (Human) protein is Sodium/hydrogen exchanger 7 (SLC9A7).